Consider the following 632-residue polypeptide: 2-oxoacid:ferredoxin oxidoreductase subunit alpha (632 aa).

Positions 254–258 match the YPITP motif motif; the sequence is YPITP. Substrate is bound by residues Thr-257 and Arg-345.

Heterodimer composed of an alpha and a beta subunit.

It carries out the reaction a 2-oxocarboxylate + 2 oxidized [2Fe-2S]-[ferredoxin] + CoA = an acyl-CoA + 2 reduced [2Fe-2S]-[ferredoxin] + CO2 + H(+). Its function is as follows. Catalyzes the coenzyme A-dependent oxidative decarboxylation of different 2-oxoacids such as 2-oxoglutarate, pyruvate and 2-oxobutyrate to form their CoA derivatives. This chain is 2-oxoacid:ferredoxin oxidoreductase subunit alpha, found in Saccharolobus solfataricus (Sulfolobus solfataricus).